The chain runs to 464 residues: NADH dehydrogenase [ubiquinone] flavoprotein 1, mitochondrial (464 aa).

Residues 1–20 (MLAARRLLGWSLPARVSVRF) constitute a mitochondrion transit peptide. The residue at position 81 (lysine 81) is an N6-acetyllysine; alternate. Lysine 81 is modified (N6-succinyllysine; alternate). Position 87–96 (87–96 (GRGGAGFPTG)) interacts with NADH. Lysine 104 bears the N6-acetyllysine mark. 199–247 (RGAGAYICGEETALIESIEGKQGKPRLKPPFPADVGVFGCPTTVANVET) is an FMN binding site. Arginine 257 bears the Omega-N-methylarginine mark. Lysine 375 is subject to N6-acetyllysine. Cysteine 379, cysteine 382, cysteine 385, and cysteine 425 together coordinate [4Fe-4S] cluster.

The protein belongs to the complex I 51 kDa subunit family. Core subunit of respiratory chain NADH dehydrogenase (Complex I) which is composed of 45 different subunits. This is a component of the flavoprotein-sulfur (FP) fragment of the enzyme. Interacts with RAB5IF. FMN is required as a cofactor. [4Fe-4S] cluster serves as cofactor.

It localises to the mitochondrion inner membrane. The catalysed reaction is a ubiquinone + NADH + 5 H(+)(in) = a ubiquinol + NAD(+) + 4 H(+)(out). In terms of biological role, core subunit of the mitochondrial membrane respiratory chain NADH dehydrogenase (Complex I) which catalyzes electron transfer from NADH through the respiratory chain, using ubiquinone as an electron acceptor. Part of the peripheral arm of the enzyme, where the electrons from NADH are accepted by flavin mononucleotide (FMN) and then passed along a chain of iron-sulfur clusters by electron tunnelling to the final acceptor ubiquinone. Contains FMN, which is the initial electron acceptor as well as one iron-sulfur cluster. This Pongo pygmaeus (Bornean orangutan) protein is NADH dehydrogenase [ubiquinone] flavoprotein 1, mitochondrial.